A 290-amino-acid polypeptide reads, in one-letter code: MVGMDLFKCVMMIMVLVVSCGEAVSGAKFDELYRSSWAMDHCVNEGEVTKLKLDNYSGAGFESRSKYLFGKVSIQIKLVEGDSAGTVTAFYMSSDGPNHNEFDFEFLGNTTGEPYIVQTNIYVNGVGNREQRLNLWFDPTTEFHTYSILWSKRSVVFMVDETPIRVQKNLEEKGIPFAKDQAMGVYSSIWNADDWATQGGLVKTDWSHAPFVASYKEFQIDACEIPTTTDLSKCNGDQKFWWDEPTVSELSLHQNHQLIWVRANHMIYDYCFDATRFPVTPLECQHHRHL.

The N-terminal stretch at 1 to 26 is a signal peptide; sequence MVGMDLFKCVMMIMVLVVSCGEAVSG. The GH16 domain occupies 27-215; that stretch reads AKFDELYRSS…WSHAPFVASY (189 aa). Residue asparagine 55 is glycosylated (N-linked (GlcNAc...) asparagine). The active-site Nucleophile is the glutamate 101. Glutamate 105 functions as the Proton donor in the catalytic mechanism. Glutamate 105 provides a ligand contact to xyloglucan. Asparagine 109 is a glycosylation site (N-linked (GlcNAc...) asparagine). Xyloglucan contacts are provided by residues 118–120, 128–130, 194–195, and glycine 199; these read QTN, NRE, and DW. 2 disulfide bridges follow: cysteine 223/cysteine 234 and cysteine 271/cysteine 284. Arginine 276 contacts xyloglucan.

This sequence belongs to the glycosyl hydrolase 16 family. XTH group 1 subfamily. Post-translationally, contains at least one intrachain disulfide bond essential for its enzymatic activity. In terms of tissue distribution, highly expressed in shoot apices. In the vegetative and reproductive phases, it accumulates in the shoot apex region, where cell division is most active. In the reproductive phase, it is also expressed in flower buds, flower stalks and internodes bearing flowers.

It localises to the secreted. The protein resides in the cell wall. Its subcellular location is the extracellular space. The protein localises to the apoplast. The catalysed reaction is breaks a beta-(1-&gt;4) bond in the backbone of a xyloglucan and transfers the xyloglucanyl segment on to O-4 of the non-reducing terminal glucose residue of an acceptor, which can be a xyloglucan or an oligosaccharide of xyloglucan.. Catalyzes xyloglucan endohydrolysis (XEH) and/or endotransglycosylation (XET). Cleaves and religates xyloglucan polymers, an essential constituent of the primary cell wall, and thereby participates in cell wall construction of growing tissues. Involved in internodal cell elongation. The chain is Xyloglucan endotransglucosylase/hydrolase protein 9 (XTH9) from Arabidopsis thaliana (Mouse-ear cress).